The primary structure comprises 767 residues: uncharacterized protein (767 aa).

3 disordered regions span residues 171 to 209 (LPVW…LRTP), 314 to 340 (ETEA…CQEE), and 533 to 566 (RDHG…PRGF). Basic and acidic residues-rich tracts occupy residues 322–331 (PDPRPEKDAK) and 552–564 (ETKD…RDPR).

This is an uncharacterized protein from Homo sapiens (Human).